Consider the following 351-residue polypeptide: Uroporphyrinogen decarboxylase (351 aa).

Residues 25 to 29, F43, D74, Y151, S206, and H325 contribute to the substrate site; that span reads RQAGR.

The protein belongs to the uroporphyrinogen decarboxylase family. As to quaternary structure, homodimer.

The protein localises to the cytoplasm. The catalysed reaction is uroporphyrinogen III + 4 H(+) = coproporphyrinogen III + 4 CO2. It participates in porphyrin-containing compound metabolism; protoporphyrin-IX biosynthesis; coproporphyrinogen-III from 5-aminolevulinate: step 4/4. In terms of biological role, catalyzes the decarboxylation of four acetate groups of uroporphyrinogen-III to yield coproporphyrinogen-III. The polypeptide is Uroporphyrinogen decarboxylase (Chlorobaculum tepidum (strain ATCC 49652 / DSM 12025 / NBRC 103806 / TLS) (Chlorobium tepidum)).